Consider the following 306-residue polypeptide: N-acetylmuramic acid 6-phosphate etherase (306 aa).

An SIS domain is found at 59–222 (TSQALAKGGR…STGTMVMLGK (164 aa)). The active-site Proton donor is the E87. Residue E118 is part of the active site.

Belongs to the GCKR-like family. MurNAc-6-P etherase subfamily. Homodimer.

The catalysed reaction is N-acetyl-D-muramate 6-phosphate + H2O = N-acetyl-D-glucosamine 6-phosphate + (R)-lactate. The protein operates within amino-sugar metabolism; N-acetylmuramate degradation. In terms of biological role, specifically catalyzes the cleavage of the D-lactyl ether substituent of MurNAc 6-phosphate, producing GlcNAc 6-phosphate and D-lactate. The sequence is that of N-acetylmuramic acid 6-phosphate etherase from Microcystis aeruginosa (strain NIES-843 / IAM M-2473).